The primary structure comprises 135 residues: Fluoride-specific ion channel FluC (135 aa).

A run of 4 helical transmembrane segments spans residues 12–32 (FLVIGLGAAFGAWTRWLLGLS), 42–62 (LGTLAANVIGGYLVGVAVGIF), 70–90 (LAWKLFAITGFLGGLTTFSTF), and 106–126 (AIGLASVHLAGSLTATYLGLL). Na(+) contacts are provided by Gly82 and Thr85.

Belongs to the fluoride channel Fluc/FEX (TC 1.A.43) family.

It is found in the cell inner membrane. The enzyme catalyses fluoride(in) = fluoride(out). With respect to regulation, na(+) is not transported, but it plays an essential structural role and its presence is essential for fluoride channel function. Its function is as follows. Fluoride-specific ion channel. Important for reducing fluoride concentration in the cell, thus reducing its toxicity. The sequence is that of Fluoride-specific ion channel FluC from Dechloromonas aromatica (strain RCB).